The chain runs to 579 residues: GPI alpha-1,2-mannosyltransferase 4 (579 aa).

Helical transmembrane passes span 131 to 151, 156 to 173, 180 to 200, 216 to 236, 258 to 278, 369 to 389, 391 to 411, and 416 to 436; these read LLLTALSFALDGAVYHLAPPM, WNALALLSGSYVTLVFYT, IEGLLFTWLLVLVSSHVTWGP, LGGIVAAGFFNRPTFLAFAVV, ALVLLPGAALTAAVFVATDSW, YLLLLYFMPLALLSAFSHQEA, FLIPLLVPLVLLCSPQTQPVP, and VVLFNALGALLFGCLHQGGLV.

The protein belongs to the glycosyltransferase 22 family. PIGZ subfamily. Widely expressed at low level, with highest level in brain and colon.

The protein localises to the endoplasmic reticulum membrane. It participates in glycolipid biosynthesis; glycosylphosphatidylinositol-anchor biosynthesis. Its function is as follows. Alpha-1,2-mannosyltransferase that catalyzes the transfer of the fourth mannose, via an alpha-1,2 bond, from a dolichol-phosphate-mannose (Dol-P-Man) to an alpha-D-Man-(1-&gt;2)-alpha-D-Man-(1-&gt;6)-2-PEtn-alpha-D-Man-(1-&gt;4)-alpha-D-GlcN-(1-&gt;6)-(1-radyl,2-acyl-sn-glycero-3-phospho)-2-acyl-inositol (also termed H6) intermediate and participates in the twelfth step of the glycosylphosphatidylinositol-anchor biosynthesis. The presence of a fourth mannose in GPI is facultative, suggesting that it only exists in some tissues. The sequence is that of GPI alpha-1,2-mannosyltransferase 4 from Homo sapiens (Human).